Consider the following 650-residue polypeptide: MVQITLPDGSQRQYPGPVTVAEVAQSIGTGLAKAALAGRVTVNDAEPKLVDTSFRIDQDAKLAIVTAKDADGLDLIRHSTAHLLAYAVKSLYPDAQVTIGPVIDNGFYYDFSYKRPFTPEDLQAIEKKMAELARKDEVVTREEWTRDDAVAYFKSIGENYKAEIIASIPSNEKISLYREGEFIDLCRGPHVPSTGKLKVFKLMKLAGAYWRGDSNNEMLQRIYGTAWATKDEQDAYLHMLEEAERRDHRKIGRDLDLFHFQDEGPGLIFWHPKGWTLWQQVEQYMRAVYRDNGYQEVKAPQILDLSLWKKTGHWDNYRENMFTTESENRVYGLKPMNCPGHVQIFNAGLHSYRELPLRYGEFGQCHRNEPSGSLHGMMRVRGFTQDDGHIFCTEDQLQDECADFTALLQKVYRDFGFTEVLYKVATRPEKRIGSDEIWDKAETALMESLRRTGCEFEISPGEGAFYGPKIEYTLKDAIGRHWQCGTIQVDFSMPVRLGAEYVDQNDQRRAPVMLHRAILGSLERFIGMLIENHAGAMPPWLAPVQAVVCCISEPSAEYAAKITQSLKKQGFRVQADLRGEKITRKIREHSLQKVPYILVVGDKEAQNGTVAVRGLGGLDLGAIPFDDFVARLNEDVASRRNVVQPDSKAV.

Positions 1 to 66 (MVQITLPDGS…DQDAKLAIVT (66 aa)) constitute a TGS domain. The segment at 247–538 (DHRKIGRDLD…LIENHAGAMP (292 aa)) is catalytic. Positions 338, 389, and 515 each coordinate Zn(2+).

Belongs to the class-II aminoacyl-tRNA synthetase family. As to quaternary structure, homodimer. Zn(2+) is required as a cofactor.

The protein resides in the cytoplasm. The enzyme catalyses tRNA(Thr) + L-threonine + ATP = L-threonyl-tRNA(Thr) + AMP + diphosphate + H(+). In terms of biological role, catalyzes the attachment of threonine to tRNA(Thr) in a two-step reaction: L-threonine is first activated by ATP to form Thr-AMP and then transferred to the acceptor end of tRNA(Thr). Also edits incorrectly charged L-seryl-tRNA(Thr). This Bordetella avium (strain 197N) protein is Threonine--tRNA ligase.